Reading from the N-terminus, the 596-residue chain is Myosin light chain kinase 2, skeletal/cardiac muscle (596 aa).

The tract at residues 1 to 224 (MATENGAVEL…AGQAKMQGDT (224 aa)) is disordered. Ala-2 bears the N-acetylalanine mark. A compositionally biased stretch (basic and acidic residues) spans 40 to 63 (DPKKAPDPPTLKKDAKAPASEKGD). Low complexity predominate over residues 88 to 104 (EGSAGPPAALPQQTATP). Ser-143, Ser-149, and Ser-151 each carry phosphoserine. Basic and acidic residues predominate over residues 189–209 (RPAKAEEGKNILAESQKEVGE). A Protein kinase domain is found at 285–540 (MNSKEALGGG…AAQCLAHPWL (256 aa)). Residues 291 to 299 (LGGGKFGAV) and Lys-314 contribute to the ATP site. The Proton acceptor role is filled by Asp-406. At Thr-445 the chain carries Phosphothreonine. Positions 574-586 (IAVSAANRFKKIS) are calmodulin-binding.

The protein belongs to the protein kinase superfamily. CAMK Ser/Thr protein kinase family. In terms of assembly, may interact with centrin. In terms of tissue distribution, heart and skeletal muscles. Increased expression in the apical tissue compared to the interventricular septal tissue.

It localises to the cytoplasm. The enzyme catalyses L-seryl-[myosin light chain] + ATP = O-phospho-L-seryl-[myosin light chain] + ADP + H(+). It carries out the reaction L-threonyl-[myosin light chain] + ATP = O-phospho-L-threonyl-[myosin light chain] + ADP + H(+). In terms of biological role, implicated in the level of global muscle contraction and cardiac function. Phosphorylates a specific serine in the N-terminus of a myosin light chain. The chain is Myosin light chain kinase 2, skeletal/cardiac muscle (MYLK2) from Homo sapiens (Human).